Consider the following 838-residue polypeptide: MGSDKRVSRSERSGRYGSAFDRDDRDDRDTRSRRRDSEYKRYRDERSSERYDDYRDYDSPERDRMRDRERRNSDRSEDGYHSDGDYMDHDYRQDYYMDEKESKTIMLRGLPININENDIRELVESFEGPQPADVRLMKRKTGLSRGFAFVEFYHLQDATRWMEANQKKLVIQGKTIAMHYSNPRPKFEDWLCNKCGLYNFRRRLKCFRCGAAKAESDLEAPSGSSDAPQSTDYYSDSGYVSSAIILRNIGPHTVVDSILSALAPYVSLVVSNIRLIKDKQTQQNRGFAFVQLPSTLEASQLLQILQTLHPPLKIDGKTVGVDFAKSARKDLVLPDGHRVSAFSVASTAIAAAQWSSTQQAQQSGEGGEYAYLQPGQEGYANYGQCSQDYQPFYQAQTGAAEQSTAPQAEGSAPVPATTSAVVCQSPQMYQQPGSPTQSGTSTAANTTPASTTSTTEEAAPPNAVIPGVKYSVPDTSTYQYDESSGYYYDPQTGLYYDPNSQYYYNSLTQQYLYWDGEKQTYLPAADGAGQSGAQPNGANAGSSKEGKEKKEKPKSKTAQQIAKDMERWAKSLNKQKENFKNSFQPLSARDEERKESAAADAGFALFEKKQGALLERQFMPDMMMMVNTEEEEKPPNKALVAAYSGDSDNEEESERLLGAVDEEKLLDWKKLACLLCRRQFPNKDALTRHQQLSDLHKQNLEVYRRSKMSEQELEALELKEREAKYRDRAAERREKYGIPEPPEPKRKRFDPTVVNYEQPTKDGIDNSNIGNKMLQAMGWKEGSGLGRKSQGITAPIQAQVRMRGAGLGAKGSSYGVNTSDSYKDAVRKAMFARFSEME.

A disordered region spans residues 1-86 (MGSDKRVSRS…EDGYHSDGDY (86 aa)). An RRM 1 domain is found at 103 to 183 (KTIMLRGLPI…KTIAMHYSNP (81 aa)). The RanBP2-type zinc-finger motif lies at 186 to 215 (KFEDWLCNKCGLYNFRRRLKCFRCGAAKAE). An RRM 2 domain is found at 242 to 326 (SAIILRNIGP…KTVGVDFAKS (85 aa)). Composition is skewed to polar residues over residues 396-406 (QTGAAEQSTAP) and 416-439 (ATTSAVVCQSPQMYQQPGSPTQSG). Disordered regions lie at residues 396–473 (QTGA…YSVP) and 524–561 (AADGAGQSGAQPNGANAGSSKEGKEKKEKPKSKTAQQI). A compositionally biased stretch (low complexity) spans 440-462 (TSTAANTTPASTTSTTEEAAPPN). A compositionally biased stretch (polar residues) spans 531–540 (SGAQPNGANA). Residues 671–696 (LACLLCRRQFPNKDALTRHQQLSDLH) form a C2H2-type zinc finger. The region spanning 766–812 (NSNIGNKMLQAMGWKEGSGLGRKSQGITAPIQAQVRMRGAGLGAKGS) is the G-patch domain.

The protein belongs to the RBM5/RBM10 family. Component of the spliceosome A complex (also known as the prespliceosome). Appears to dissociate from the spliceosome upon formation of the spliceosome B complex (also known as the precatalytic spliceosome), in which the heterotrimeric U4/U6.U5 snRNPs are bound.

The protein localises to the nucleus. Functionally, component of the spliceosome A complex. Regulates alternative splicing of a number of mRNAs. May modulate splice site pairing after recruitment of the U1 and U2 snRNPs to the 5' and 3' splice sites of the intron. The polypeptide is RNA-binding protein 5 (rbm5) (Xenopus tropicalis (Western clawed frog)).